We begin with the raw amino-acid sequence, 484 residues long: Ribonuclease Y (484 aa).

Residues 18 to 38 (FFAFLFLIIIAFNLCLFAYLY) form a helical membrane-spanning segment. Positions 166 to 234 (SPSFLISESD…LTVRNILMND (69 aa)) constitute a KH domain. Residues 293–385 (VLSHSLETAF…TQIADKLSAA (93 aa)) form the HD domain.

This sequence belongs to the RNase Y family.

The protein localises to the cell membrane. Its function is as follows. Endoribonuclease that initiates mRNA decay. This chain is Ribonuclease Y, found in Mycoplasma genitalium (strain ATCC 33530 / DSM 19775 / NCTC 10195 / G37) (Mycoplasmoides genitalium).